Here is a 316-residue protein sequence, read N- to C-terminus: MLP-like protein 34 (316 aa).

It belongs to the MLP family.

This is MLP-like protein 34 (MLP34) from Arabidopsis thaliana (Mouse-ear cress).